A 326-amino-acid chain; its full sequence is MRLFILAVLTVGVLGSNDDLWHQWKRMYNKEYNGADDQHRRNIWEKNVKHIQEHNLRHDLGLVTYTLGLNQFTDMTFEEFKAKYLTEMSRASDILSHGVPYEANNRAVPDKIDWRESGYVTEVKDQGNCGSCWAFSTTGTMEGQYMKNERTSISFSEQQLVDCSGPWGNNGCSGGLMENAYQYLKQFGLETESSYPYTAVEGQCRYNKQLGVAKVTGYYTVHSGSEVELKNLVGARRPAAVAVDVESDFMMYRSGIYQSQTCSPLRVNHAVLAVGYGTQGGTDYWIVKNSWGTYWGERGYIRMARNRGNMCGIASLASLPMVARFP.

The N-terminal stretch at 1–15 (MRLFILAVLTVGVLG) is a signal peptide. Positions 16–106 (SNDDLWHQWK…HGVPYEANNR (91 aa)) are cleaved as a propeptide — activation peptide. The residue at position 109 (proline 109) is a 3-hydroxyproline; partial. Intrachain disulfides connect cysteine 129-cysteine 172, cysteine 163-cysteine 204, and cysteine 262-cysteine 311. Cysteine 132 is a catalytic residue. The residue at position 196 (proline 196) is a 3-hydroxyproline; partial. Active-site residues include histidine 269 and asparagine 289.

It belongs to the peptidase C1 family. Monomer. Post-translationally, contains cysteine residues involved in intramolecular disulfide bonding.

Its subcellular location is the secreted. With respect to regulation, strongly inhibited by Antipain, E64 and Leupeptin, and weakly inhibited by iodoacetic acid (IAA) and phenylmethylsulfonyl fluoride (PMSF). Requires the presence of dithiothreitol (DTT) for activity. Its function is as follows. Thiol protease. Probably involved in interaction with host tissues. Displays a similar activity to that of papain. Has high activity on Z-Phe-Arg-NHMec, but no activity on Z-Arg-NHMec. This chain is Cathepsin L-like proteinase, found in Fasciola hepatica (Liver fluke).